We begin with the raw amino-acid sequence, 348 residues long: D-fructose 1,6-bisphosphatase class 2/sedoheptulose 1,7-bisphosphatase 2 (348 aa).

Residues D33, E57, D97, and E100 each contribute to the Mn(2+) site. Residues 100-102, Y131, 176-178, and 198-200 contribute to the substrate site; these read EGT, RER, and DGD. Residue E225 participates in Mn(2+) binding.

The protein belongs to the FBPase class 2 family. In terms of assembly, homotetramer.

The enzyme catalyses beta-D-fructose 1,6-bisphosphate + H2O = beta-D-fructose 6-phosphate + phosphate. It catalyses the reaction D-sedoheptulose 1,7-bisphosphate + H2O = D-sedoheptulose 7-phosphate + phosphate. It participates in carbohydrate biosynthesis; Calvin cycle. Its function is as follows. Catalyzes the hydrolysis of fructose 1,6-bisphosphate (Fru 1,6-P2) and sedoheptulose 1,7-bisphosphate (Sed 1,7-P2) to fructose 6-phosphate and sedoheptulose 7-phosphate, respectively. The polypeptide is D-fructose 1,6-bisphosphatase class 2/sedoheptulose 1,7-bisphosphatase 2 (Acaryochloris marina (strain MBIC 11017)).